The primary structure comprises 699 residues: Elongation factor G (699 aa).

One can recognise a tr-type G domain in the interval 8 to 290 (ERYRNIGIMA…GVIEYLPSPV (283 aa)). GTP-binding positions include 17-24 (AHIDAGKT), 88-92 (DTPGH), and 142-145 (NKMD).

This sequence belongs to the TRAFAC class translation factor GTPase superfamily. Classic translation factor GTPase family. EF-G/EF-2 subfamily.

It is found in the cytoplasm. Its function is as follows. Catalyzes the GTP-dependent ribosomal translocation step during translation elongation. During this step, the ribosome changes from the pre-translocational (PRE) to the post-translocational (POST) state as the newly formed A-site-bound peptidyl-tRNA and P-site-bound deacylated tRNA move to the P and E sites, respectively. Catalyzes the coordinated movement of the two tRNA molecules, the mRNA and conformational changes in the ribosome. The sequence is that of Elongation factor G from Alkalilimnicola ehrlichii (strain ATCC BAA-1101 / DSM 17681 / MLHE-1).